The primary structure comprises 901 residues: HTH-type transcriptional regulator MalT (901 aa).

Residue 39–46 participates in ATP binding; it reads SPAGYGKT. In terms of domain architecture, HTH luxR-type spans 829 to 894; it reads ELIRTSPLTQ…DAVQHAQQLL (66 aa). Positions 853–872 form a DNA-binding region, H-T-H motif; that stretch reads NEQIAGELAVAATTIKTHIR.

It belongs to the MalT family. As to quaternary structure, monomer in solution. Oligomerizes to an active state in the presence of the positive effectors ATP and maltotriose.

Its activity is regulated as follows. Activated by ATP and maltotriose, which are both required for DNA binding. Its function is as follows. Positively regulates the transcription of the maltose regulon whose gene products are responsible for uptake and catabolism of malto-oligosaccharides. Specifically binds to the promoter region of its target genes, recognizing a short DNA motif called the MalT box. The chain is HTH-type transcriptional regulator MalT from Enterobacter sp. (strain 638).